The primary structure comprises 123 residues: Small ribosomal subunit protein uS12 (123 aa).

The segment at 1–29 is disordered; the sequence is MPTINQLVRKGREPQKAKSKVPAMEQNPQ. At Asp89 the chain carries 3-methylthioaspartic acid.

This sequence belongs to the universal ribosomal protein uS12 family. In terms of assembly, part of the 30S ribosomal subunit. Contacts proteins S8 and S17. May interact with IF1 in the 30S initiation complex.

Its function is as follows. With S4 and S5 plays an important role in translational accuracy. Functionally, interacts with and stabilizes bases of the 16S rRNA that are involved in tRNA selection in the A site and with the mRNA backbone. Located at the interface of the 30S and 50S subunits, it traverses the body of the 30S subunit contacting proteins on the other side and probably holding the rRNA structure together. The combined cluster of proteins S8, S12 and S17 appears to hold together the shoulder and platform of the 30S subunit. The protein is Small ribosomal subunit protein uS12 of Novosphingobium aromaticivorans (strain ATCC 700278 / DSM 12444 / CCUG 56034 / CIP 105152 / NBRC 16084 / F199).